We begin with the raw amino-acid sequence, 395 residues long: Phosphoglycerate kinase (395 aa).

Substrate-binding positions include 20–22 (DFN), Arg-36, 59–62 (HLGR), Arg-120, and Arg-157. Residues Lys-208, Gly-296, Glu-327, and 353-356 (GGDT) contribute to the ATP site.

It belongs to the phosphoglycerate kinase family. In terms of assembly, monomer.

It localises to the cytoplasm. It carries out the reaction (2R)-3-phosphoglycerate + ATP = (2R)-3-phospho-glyceroyl phosphate + ADP. Its pathway is carbohydrate degradation; glycolysis; pyruvate from D-glyceraldehyde 3-phosphate: step 2/5. The protein is Phosphoglycerate kinase of Tropheryma whipplei (strain Twist) (Whipple's bacillus).